The primary structure comprises 151 residues: Ribosome-binding factor A (151 aa).

The interval 120-151 (RSPKVVRDLDDTSSDDTSPDANTDTDKETDAE) is disordered.

It belongs to the RbfA family. Monomer. Binds 30S ribosomal subunits, but not 50S ribosomal subunits or 70S ribosomes.

It localises to the cytoplasm. One of several proteins that assist in the late maturation steps of the functional core of the 30S ribosomal subunit. Associates with free 30S ribosomal subunits (but not with 30S subunits that are part of 70S ribosomes or polysomes). Required for efficient processing of 16S rRNA. May interact with the 5'-terminal helix region of 16S rRNA. The polypeptide is Ribosome-binding factor A (Xanthobacter autotrophicus (strain ATCC BAA-1158 / Py2)).